Consider the following 287-residue polypeptide: MDQPKAVAPNAVVEIKTPTGAPVRIGNGEKLSIIAGPCQMESRQHALETAHALKEMADRLGVGLIYKTSYDKANRTSANAQRGIGLKDSLAIFQEIREVTGLPTLTDVHETSHCSIVAEAVDVIQIPAFLCRQTDLLVAAASTGRAINIKKGQFLAPWDMKNVIAKVTGAGNPNVMACERGASFGYNTLVSDMRALPIMKEIGCPVVFDATHSVQQPGGQGTSSGGQREFVPTLARAAVAVGVACVFIETHPDPDNAPSDGPNMVPVKEFEALVANLLRYDALTKAA.

This sequence belongs to the KdsA family.

The protein resides in the cytoplasm. The catalysed reaction is D-arabinose 5-phosphate + phosphoenolpyruvate + H2O = 3-deoxy-alpha-D-manno-2-octulosonate-8-phosphate + phosphate. It participates in carbohydrate biosynthesis; 3-deoxy-D-manno-octulosonate biosynthesis; 3-deoxy-D-manno-octulosonate from D-ribulose 5-phosphate: step 2/3. It functions in the pathway bacterial outer membrane biogenesis; lipopolysaccharide biosynthesis. The sequence is that of 2-dehydro-3-deoxyphosphooctonate aldolase from Caulobacter vibrioides (strain ATCC 19089 / CIP 103742 / CB 15) (Caulobacter crescentus).